Here is a 191-residue protein sequence, read N- to C-terminus: Peptidyl-tRNA hydrolase (191 aa).

Position 17 (tyrosine 17) interacts with tRNA. The active-site Proton acceptor is the histidine 22. Residues tyrosine 68, asparagine 70, and asparagine 116 each coordinate tRNA.

Belongs to the PTH family. In terms of assembly, monomer.

The protein localises to the cytoplasm. The enzyme catalyses an N-acyl-L-alpha-aminoacyl-tRNA + H2O = an N-acyl-L-amino acid + a tRNA + H(+). In terms of biological role, hydrolyzes ribosome-free peptidyl-tRNAs (with 1 or more amino acids incorporated), which drop off the ribosome during protein synthesis, or as a result of ribosome stalling. Functionally, catalyzes the release of premature peptidyl moieties from peptidyl-tRNA molecules trapped in stalled 50S ribosomal subunits, and thus maintains levels of free tRNAs and 50S ribosomes. This chain is Peptidyl-tRNA hydrolase, found in Francisella tularensis subsp. tularensis (strain FSC 198).